We begin with the raw amino-acid sequence, 111 residues long: C-type lectin lectoxin-Enh1 (111 aa).

The signal sequence occupies residues 1–23; that stretch reads MGQFTVVSLGLLAMFLSLSGAKG. Cysteine 26 and cysteine 37 are joined by a disulfide. One can recognise a C-type lectin domain in the interval 33 to 108; sequence RNGVCNKLFP…CASLHPFICQ (76 aa). Residues 72 to 74 carry the Mannose-binding motif; that stretch reads EPN. Residues glutamate 80, asparagine 95, and aspartate 96 each coordinate Ca(2+). A disulfide bridge connects residues cysteine 82 and cysteine 99.

This sequence belongs to the true venom lectin family. In terms of tissue distribution, expressed by the venom gland.

Its subcellular location is the secreted. Mannose-binding lectin which recognizes specific carbohydrate structures and agglutinates a variety of animal cells by binding to cell-surface glycoproteins and glycolipids. May be a calcium-dependent lectin. This is C-type lectin lectoxin-Enh1 from Pseudoferania polylepis (Macleay's water snake).